The primary structure comprises 306 residues: OVARIAN TUMOR DOMAIN-containing deubiquitinating enzyme 1 (306 aa).

Residues 81 to 295 (IGIRRTRGDG…PGHYDILYPK (215 aa)) enclose the OTU domain. Aspartate 89 is a catalytic residue. Cysteine 92 serves as the catalytic Nucleophile. Active-site residues include histidine 259 and histidine 288.

The protein belongs to the peptidase C65 family.

It catalyses the reaction Thiol-dependent hydrolysis of ester, thioester, amide, peptide and isopeptide bonds formed by the C-terminal Gly of ubiquitin (a 76-residue protein attached to proteins as an intracellular targeting signal).. With respect to regulation, cleavage activities for 'Lys-48'- and 'Lys-63'-linked ubiquitin (UB) tetramers is inhibited by UB aldehyde and N-ethylmaleimide but not by the metalloprotease inhibitors 1,10-phenanthroline and EDTA, and the serine protease inhibitor phenylmethylsulfonyl fluoride. Functionally, hydrolase that can remove conjugated ubiquitin from proteins in vitro and may therefore play an important regulatory role at the level of protein turnover by preventing degradation. Cysteine protease with a preference for Met-1 and 'Lys-48' over 'Lys-63'-linked ubiquitin (UB) tetramers (e.g. Ub2, Ub3 and Ub4) as substrates. The polypeptide is OVARIAN TUMOR DOMAIN-containing deubiquitinating enzyme 1 (Arabidopsis thaliana (Mouse-ear cress)).